A 160-amino-acid polypeptide reads, in one-letter code: Small ribosomal subunit protein uS7 (160 aa).

Belongs to the universal ribosomal protein uS7 family. In terms of assembly, part of the 30S ribosomal subunit. Contacts proteins S9 and S11.

One of the primary rRNA binding proteins, it binds directly to 16S rRNA where it nucleates assembly of the head domain of the 30S subunit. Is located at the subunit interface close to the decoding center, probably blocks exit of the E-site tRNA. The chain is Small ribosomal subunit protein uS7 from Rickettsia akari (strain Hartford).